Here is a 120-residue protein sequence, read N- to C-terminus: Ribosome-binding factor A (120 aa).

It belongs to the RbfA family. As to quaternary structure, monomer. Binds 30S ribosomal subunits, but not 50S ribosomal subunits or 70S ribosomes.

Its subcellular location is the cytoplasm. In terms of biological role, one of several proteins that assist in the late maturation steps of the functional core of the 30S ribosomal subunit. Associates with free 30S ribosomal subunits (but not with 30S subunits that are part of 70S ribosomes or polysomes). Required for efficient processing of 16S rRNA. May interact with the 5'-terminal helix region of 16S rRNA. In Rickettsia felis (strain ATCC VR-1525 / URRWXCal2) (Rickettsia azadi), this protein is Ribosome-binding factor A.